The chain runs to 675 residues: DNA ligase (675 aa).

NAD(+) is bound by residues 34 to 38 (DAEYD), 83 to 84 (SL), and Glu-116. Lys-118 acts as the N6-AMP-lysine intermediate in catalysis. The NAD(+) site is built by Arg-139, Glu-176, Lys-293, and Lys-317. Zn(2+) contacts are provided by Cys-411, Cys-414, Cys-429, and Cys-435. The region spanning 594–675 (AGENPFKGKT…FLAIVNAYKR (82 aa)) is the BRCT domain.

Belongs to the NAD-dependent DNA ligase family. LigA subfamily. Mg(2+) serves as cofactor. Mn(2+) is required as a cofactor.

It catalyses the reaction NAD(+) + (deoxyribonucleotide)n-3'-hydroxyl + 5'-phospho-(deoxyribonucleotide)m = (deoxyribonucleotide)n+m + AMP + beta-nicotinamide D-nucleotide.. DNA ligase that catalyzes the formation of phosphodiester linkages between 5'-phosphoryl and 3'-hydroxyl groups in double-stranded DNA using NAD as a coenzyme and as the energy source for the reaction. It is essential for DNA replication and repair of damaged DNA. In Mannheimia succiniciproducens (strain KCTC 0769BP / MBEL55E), this protein is DNA ligase.